A 419-amino-acid chain; its full sequence is UDP-N-acetylglucosamine 1-carboxyvinyltransferase (419 aa).

22-23 (KN) is a phosphoenolpyruvate binding site. R91 is a UDP-N-acetyl-alpha-D-glucosamine binding site. The active-site Proton donor is C115. C115 is modified (2-(S-cysteinyl)pyruvic acid O-phosphothioketal). Residues 120-124 (RPVDL), 160-163 (KVSV), D305, and I327 contribute to the UDP-N-acetyl-alpha-D-glucosamine site.

Belongs to the EPSP synthase family. MurA subfamily.

It localises to the cytoplasm. The enzyme catalyses phosphoenolpyruvate + UDP-N-acetyl-alpha-D-glucosamine = UDP-N-acetyl-3-O-(1-carboxyvinyl)-alpha-D-glucosamine + phosphate. It participates in cell wall biogenesis; peptidoglycan biosynthesis. Its function is as follows. Cell wall formation. Adds enolpyruvyl to UDP-N-acetylglucosamine. The protein is UDP-N-acetylglucosamine 1-carboxyvinyltransferase of Citrobacter koseri (strain ATCC BAA-895 / CDC 4225-83 / SGSC4696).